A 448-amino-acid chain; its full sequence is N-succinylarginine dihydrolase (448 aa).

Substrate-binding positions include 19–28 (AGLSSGNIAS), Asn110, and 137–138 (HR). Glu174 is a catalytic residue. Substrate is bound at residue Arg216. His252 is an active-site residue. Asp254 and Asn366 together coordinate substrate. Cys372 acts as the Nucleophile in catalysis.

It belongs to the succinylarginine dihydrolase family. Homodimer.

It carries out the reaction N(2)-succinyl-L-arginine + 2 H2O + 2 H(+) = N(2)-succinyl-L-ornithine + 2 NH4(+) + CO2. The protein operates within amino-acid degradation; L-arginine degradation via AST pathway; L-glutamate and succinate from L-arginine: step 2/5. Functionally, catalyzes the hydrolysis of N(2)-succinylarginine into N(2)-succinylornithine, ammonia and CO(2). This chain is N-succinylarginine dihydrolase, found in Legionella pneumophila (strain Corby).